We begin with the raw amino-acid sequence, 158 residues long: S-ribosylhomocysteine lyase (158 aa).

The Fe cation site is built by His-54, His-58, and Cys-124.

Belongs to the LuxS family. In terms of assembly, homodimer. Requires Fe cation as cofactor.

The enzyme catalyses S-(5-deoxy-D-ribos-5-yl)-L-homocysteine = (S)-4,5-dihydroxypentane-2,3-dione + L-homocysteine. In terms of biological role, involved in the synthesis of autoinducer 2 (AI-2) which is secreted by bacteria and is used to communicate both the cell density and the metabolic potential of the environment. The regulation of gene expression in response to changes in cell density is called quorum sensing. Catalyzes the transformation of S-ribosylhomocysteine (RHC) to homocysteine (HC) and 4,5-dihydroxy-2,3-pentadione (DPD). This chain is S-ribosylhomocysteine lyase, found in Lactobacillus johnsonii (strain CNCM I-12250 / La1 / NCC 533).